The chain runs to 445 residues: Proline--tRNA ligase (445 aa).

This sequence belongs to the class-II aminoacyl-tRNA synthetase family. ProS type 2 subfamily. In terms of assembly, homodimer.

Its subcellular location is the cytoplasm. It catalyses the reaction tRNA(Pro) + L-proline + ATP = L-prolyl-tRNA(Pro) + AMP + diphosphate. Its function is as follows. Catalyzes the attachment of proline to tRNA(Pro) in a two-step reaction: proline is first activated by ATP to form Pro-AMP and then transferred to the acceptor end of tRNA(Pro). The sequence is that of Proline--tRNA ligase from Dinoroseobacter shibae (strain DSM 16493 / NCIMB 14021 / DFL 12).